The following is a 447-amino-acid chain: Omega-3 fatty acid desaturase, chloroplastic (447 aa).

The Histidine box-1 motif lies at 167–171; sequence HDCGH. A Histidine box-2 motif is present at residues 203–207; sequence HRTHH. Positions 370–374 match the Histidine box-3 motif; sequence HVIHH.

This sequence belongs to the fatty acid desaturase type 1 family.

The protein localises to the plastid. Its subcellular location is the chloroplast membrane. Its pathway is lipid metabolism; polyunsaturated fatty acid biosynthesis. Its function is as follows. Chloroplast omega-3 fatty acid desaturase introduces the third double bond in the biosynthesis of 16:3 and 18:3 fatty acids, important constituents of plant membranes. It is thought to use ferredoxin as an electron donor and to act on fatty acids esterified to galactolipids, sulfolipids and phosphatidylglycerol. The sequence is that of Omega-3 fatty acid desaturase, chloroplastic (FAD7) from Sesamum indicum (Oriental sesame).